The chain runs to 137 residues: Small ribosomal subunit protein eS17 (137 aa).

The protein belongs to the eukaryotic ribosomal protein eS17 family. As to quaternary structure, component of the small ribosomal subunit. Mature ribosomes consist of a small (40S) and a large (60S) subunit. The 40S subunit contains about 32 different proteins and 1 molecule of RNA (18S). The 60S subunit contains 45 different proteins and 3 molecules of RNA (25S, 5.8S and 5S).

It is found in the cytoplasm. Functionally, component of the ribosome, a large ribonucleoprotein complex responsible for the synthesis of proteins in the cell. The small ribosomal subunit (SSU) binds messenger RNAs (mRNAs) and translates the encoded message by selecting cognate aminoacyl-transfer RNA (tRNA) molecules. The large subunit (LSU) contains the ribosomal catalytic site termed the peptidyl transferase center (PTC), which catalyzes the formation of peptide bonds, thereby polymerizing the amino acids delivered by tRNAs into a polypeptide chain. The nascent polypeptides leave the ribosome through a tunnel in the LSU and interact with protein factors that function in enzymatic processing, targeting, and the membrane insertion of nascent chains at the exit of the ribosomal tunnel. This chain is Small ribosomal subunit protein eS17 (RPS17B), found in Candida albicans (strain SC5314 / ATCC MYA-2876) (Yeast).